Here is a 246-residue protein sequence, read N- to C-terminus: FAD synthetase (246 aa).

This sequence belongs to the RibF family.

It catalyses the reaction FMN + ATP + H(+) = FAD + diphosphate. Its pathway is cofactor biosynthesis; FAD biosynthesis; FAD from FMN: step 1/1. Functionally, catalyzes the adenylation of flavin mononucleotide (FMN) to form flavin adenine dinucleotide (FAD) coenzyme. Can also catalyze, with lower efficiency, the adenylation of the toxic riboflavin analogs 8-demethyl-8-aminoriboflavin mononucleotide (AFMN) and roseoflavin mononucleotide (RoFMN) to 8-demethyl-8-aminoriboflavin adenine dinucleotide (AFAD) and roseoflavin adenine dinucleotide (RoFAD), respectively. This chain is FAD synthetase, found in Listeria monocytogenes serovar 1/2a (strain ATCC BAA-679 / EGD-e).